Reading from the N-terminus, the 324-residue chain is D-erythronate dehydrogenase (324 aa).

NAD(+) is bound by residues Ser125, Tyr149, and Lys153. Tyr149 functions as the Proton acceptor in the catalytic mechanism.

This sequence belongs to the NAD(P)-dependent epimerase/dehydratase family.

The enzyme catalyses D-erythronate + NAD(+) = 2-dehydro-D-erythronate + NADH + H(+). Its function is as follows. Catalyzes oxidation of D-erythronate to 2-oxo-tetronate. Can use either NAD(+) or NADP(+) as cosubstrate, with a preference for NAD(+). This chain is D-erythronate dehydrogenase, found in Cupriavidus necator (strain ATCC 17699 / DSM 428 / KCTC 22496 / NCIMB 10442 / H16 / Stanier 337) (Ralstonia eutropha).